The following is a 1161-amino-acid chain: Auxin response factor 19 (1161 aa).

Residues 1–20 (MMKQAQQQPPPPPASSAATT) form a disordered region. The TF-B3 DNA-binding region spans 154-256 (FCKTLTASDT…QLLLGIRRAN (103 aa)). Residues 573–598 (NQMQQQHASSTQGQQPATSQPLLLPQ) form a disordered region. Residues 1027–1111 (RTFTKVYKRG…KCIRILSPQE (85 aa)) enclose the PB1 domain.

This sequence belongs to the ARF family. Homodimers and heterodimers. Expressed in roots, culms, leaves and young panicles.

The protein localises to the nucleus. Auxin response factors (ARFs) are transcriptional factors that bind specifically to the DNA sequence 5'-TGTCTC-3' found in the auxin-responsive promoter elements (AuxREs). In Oryza sativa subsp. japonica (Rice), this protein is Auxin response factor 19 (ARF19).